The primary structure comprises 82 residues: Delta-actitoxin-Aeq2c (82 aa).

The N-terminal stretch at 1-19 is a signal peptide; that stretch reads MNRLMILVFAAVFLALASA. Residues 20–26 constitute a propeptide that is removed on maturation; sequence DEDVDIA. Cystine bridges form between Cys32/Cys79, Cys34/Cys69, and Cys62/Cys80.

The protein belongs to the sea anemone sodium channel inhibitory toxin family. Type I subfamily.

The protein resides in the secreted. It localises to the nematocyst. Functionally, binds specifically to voltage-gated sodium channels (Nav), thereby delaying their inactivation during signal transduction. Causes death to crabs. The polypeptide is Delta-actitoxin-Aeq2c (Actinia equina (Beadlet anemone)).